Reading from the N-terminus, the 489-residue chain is Serine/threonine-protein kinase BSK3 (489 aa).

A lipid anchor (N-myristoyl glycine) is attached at Gly-2. The Protein kinase domain occupies 58-324; that stretch reads EYIVSEHGEK…ETEVLSHVLM (267 aa). ATP is bound by residues 64 to 72 and Lys-86; that span reads HGEKAPNVV. Asp-180 (proton acceptor) is an active-site residue. Ser-212 bears the Phosphoserine mark.

Belongs to the protein kinase superfamily. Ser/Thr protein kinase family. In terms of assembly, interacts with BRI1. Post-translationally, phosphorylated by BRI1 upon brassinolide (BL) treatment. Phosphorylated by ASK7/BIN2 and ASK9/BIL2.

It localises to the cell membrane. The catalysed reaction is L-seryl-[protein] + ATP = O-phospho-L-seryl-[protein] + ADP + H(+). It catalyses the reaction L-threonyl-[protein] + ATP = O-phospho-L-threonyl-[protein] + ADP + H(+). In terms of biological role, probable serine/threonine kinase that acts as a positive regulator of brassinosteroid (BR) signaling downstream of the receptor kinase BRI1. Mediates signal transduction from BRI1 by functioning as substrate of BRI1. Functions redundantly with BSK4, BSK6, BSK7 and BSK8. This Arabidopsis thaliana (Mouse-ear cress) protein is Serine/threonine-protein kinase BSK3.